A 386-amino-acid chain; its full sequence is MNISNIKIMLLGSGELGKEFIIAAQRLGIHTIAVDRYKNAPAMQVAHESYVIDMLNADALEQLILAKNPTYIVPEIEAINTDSLVKLEAHNFNIIPCAKATKLTMDRQGIRALAAQQLNLQTSKFAFANSEQEYLDVIQSIGLPFVIKPVMSSSGKGQSIVKEHNEIKKAWDYAQNGSRGHAKGVIVEQFIDFDYEITLLTVRHKDGTSFCDPIGHIQKDGDYRFSWQPHTMSDTALAKSQGIAKEITDALGGYGVFGVELFIKGDEVFFNEVSPRPHDTGMVTLISQNINEFELHLRAIVGLPIPDIQTLQPSASAAILLEGDTANASICGIDKALADANVDIRIFGKKEIHGKRRMGVVLTKAQNTHIALETSKQALAYIHLTK.

N(1)-(5-phospho-beta-D-ribosyl)glycinamide is bound by residues glutamate 15–leucine 16 and glutamate 75. Residues arginine 107, lysine 148, serine 153–glutamine 158, glutamate 188–isoleucine 191, and glutamate 196 contribute to the ATP site. The ATP-grasp domain occupies alanine 112 to valine 301. Mg(2+)-binding residues include glutamate 260 and glutamate 272. N(1)-(5-phospho-beta-D-ribosyl)glycinamide is bound by residues aspartate 279, lysine 349, and arginine 356 to arginine 357.

This sequence belongs to the PurK/PurT family. Homodimer.

The enzyme catalyses N(1)-(5-phospho-beta-D-ribosyl)glycinamide + formate + ATP = N(2)-formyl-N(1)-(5-phospho-beta-D-ribosyl)glycinamide + ADP + phosphate + H(+). The protein operates within purine metabolism; IMP biosynthesis via de novo pathway; N(2)-formyl-N(1)-(5-phospho-D-ribosyl)glycinamide from N(1)-(5-phospho-D-ribosyl)glycinamide (formate route): step 1/1. In terms of biological role, involved in the de novo purine biosynthesis. Catalyzes the transfer of formate to 5-phospho-ribosyl-glycinamide (GAR), producing 5-phospho-ribosyl-N-formylglycinamide (FGAR). Formate is provided by PurU via hydrolysis of 10-formyl-tetrahydrofolate. The polypeptide is Formate-dependent phosphoribosylglycinamide formyltransferase (Francisella tularensis subsp. novicida (strain U112)).